The primary structure comprises 459 residues: Cysteine--tRNA ligase (459 aa).

Cysteine 28 serves as a coordination point for Zn(2+). A 'HIGH' region motif is present at residues valine 30 to histidine 40. 3 residues coordinate Zn(2+): cysteine 209, histidine 234, and glutamate 238. Positions lysine 266 to serine 270 match the 'KMSKS' region motif. Lysine 269 contributes to the ATP binding site.

This sequence belongs to the class-I aminoacyl-tRNA synthetase family. Monomer. The cofactor is Zn(2+).

It localises to the cytoplasm. It carries out the reaction tRNA(Cys) + L-cysteine + ATP = L-cysteinyl-tRNA(Cys) + AMP + diphosphate. This Actinobacillus pleuropneumoniae serotype 3 (strain JL03) protein is Cysteine--tRNA ligase.